A 493-amino-acid chain; its full sequence is MTLVNKFVTHVISESSFEEMDRIYLTNRVLARVGEGVLEVETNLDKLIDLKDQLVEEAVRLETIEDSQTAREILGAELMDLVTPCPSQVNRDFWATYAHSPEQAIEDFYQLSQKNDYIKLKAIARNIAYRVPSDYGELEITINLSKPEKDPKEIVAAKLVQASNYPQCQLCLENEGYHGRVNHPARSNHRIIRFEMVGQEWGFQYSPYAYFNEHCIFLDGQHRPMAISRQSFERLLAIVDQFPGYFAGSNADLPIVGGSILTHDHYQGGRHVFPMELAPLQKAFRFAGFEQVKAGIVKWPMSVLRLTSDSKEDLINLADKILQEWRQYSDPAVQILAETDRTPHHTITPIARKRDGQFELDLVLRDNQTSAEYPDGIYHPHKDVQHIKKENIGLIEVMGLAILPPRLKEEVEQVASYLVGEAVTVADYHQEWADQLKSQHPDLTDKEKALAIVKDSVGAIFARVLEDAGVYKQTEQGQTAFMRFVEQVGILLD.

Belongs to the galactose-1-phosphate uridylyltransferase type 2 family.

Its subcellular location is the cytoplasm. It carries out the reaction alpha-D-galactose 1-phosphate + UDP-alpha-D-glucose = alpha-D-glucose 1-phosphate + UDP-alpha-D-galactose. Its pathway is carbohydrate metabolism; galactose metabolism. The chain is Galactose-1-phosphate uridylyltransferase 2 (galT2) from Streptococcus pneumoniae serotype 4 (strain ATCC BAA-334 / TIGR4).